The primary structure comprises 380 residues: Cytochrome b (380 aa).

Transmembrane regions (helical) follow at residues phenylalanine 34–alanine 54, tryptophan 78–isoleucine 99, tryptophan 114–leucine 134, and phenylalanine 179–threonine 199. Residues histidine 84 and histidine 98 each coordinate heme b. Positions 183 and 197 each coordinate heme b. Position 202 (histidine 202) interacts with a ubiquinone. The next 4 membrane-spanning stretches (helical) occupy residues leucine 227 to serine 247, leucine 289 to histidine 309, phenylalanine 321 to serine 341, and phenylalanine 348 to proline 368.

The protein belongs to the cytochrome b family. The cytochrome bc1 complex contains 11 subunits: 3 respiratory subunits (MT-CYB, CYC1 and UQCRFS1), 2 core proteins (UQCRC1 and UQCRC2) and 6 low-molecular weight proteins (UQCRH/QCR6, UQCRB/QCR7, UQCRQ/QCR8, UQCR10/QCR9, UQCR11/QCR10 and a cleavage product of UQCRFS1). This cytochrome bc1 complex then forms a dimer. Heme b serves as cofactor.

Its subcellular location is the mitochondrion inner membrane. Component of the ubiquinol-cytochrome c reductase complex (complex III or cytochrome b-c1 complex) that is part of the mitochondrial respiratory chain. The b-c1 complex mediates electron transfer from ubiquinol to cytochrome c. Contributes to the generation of a proton gradient across the mitochondrial membrane that is then used for ATP synthesis. This is Cytochrome b (MT-CYB) from Bugeranus carunculatus (Wattled crane).